We begin with the raw amino-acid sequence, 677 residues long: Histidine ammonia-lyase (677 aa).

The 5-imidazolinone (Cys-Gly) cross-link spans 269–271 (CSG). Serine 270 is modified (2,3-didehydroalanine (Ser)).

It belongs to the PAL/histidase family. Contains an active site 4-methylidene-imidazol-5-one (MIO), which is formed autocatalytically by cyclization and dehydration of residues Cys-Ser-Gly.

It catalyses the reaction L-histidine = trans-urocanate + NH4(+). The protein operates within amino-acid degradation; L-histidine degradation into L-glutamate; N-formimidoyl-L-glutamate from L-histidine: step 1/3. This is Histidine ammonia-lyase from Caenorhabditis elegans.